The sequence spans 83 residues: Small ribosomal subunit protein bS16 (83 aa).

The protein belongs to the bacterial ribosomal protein bS16 family.

This is Small ribosomal subunit protein bS16 from Magnetococcus marinus (strain ATCC BAA-1437 / JCM 17883 / MC-1).